Consider the following 238-residue polypeptide: Glutamine amidotransferase-like protein chyE (238 aa).

The Glutamine amidotransferase type-1 domain occupies 8 to 238 (KIAVLINTPP…LERVLQWLSE (231 aa)). Cys102 functions as the Nucleophile in the catalytic mechanism. Active-site residues include His189 and Glu191.

Belongs to the peptidase C26 family.

It functions in the pathway pigment biosynthesis. Its function is as follows. Glutamine amidotransferase-like protein; part of the gene cluster that mediates the biosynthesis of the yellow pigment chrysogine. the NRPS chyA mediates the condensation of anthranilic acid and alanine into the intermediate 2-(2-aminopropanamido)benzoic acid. The remainder of the pathway is highly branched yielding at least 13 chrysogine-related compounds. The malonyl transferase chyE converts 2-(2-aminopropanamido)benzoic acid and 2-(2-aminopropanamido)benzamidine into 2-(2-(2-carboxyacetamido)propanamido)benzoic acid and 3-((1-((2-carbamoylphenyl)amino)-1-oxopropan-2-yl)amino)-3-oxopropanoic acid, respectively. ChyD is an amidase, being responsible for the amidation of the carboxylic acid moiety of 2-(2-aminopropanamido)benzoic acid, 2-(2-(2-carboxyacetamido)propanamido)benzoic acid and 2-(2-((4-amino-1-carboxy-4-oxobutyl)amino)propanamido)benzoic acid. ChyC is involved in the same reactions as ChyD, but plays a more minor role in the amidation reactions compared to chyD. The oxidoreductases chyH and chyM are involved in oxidation reactions that form N-pyruvoylanthranilamide from 2-(2-aminopropanamido)benzamidine and (1-((2-carbamoylphenyl)amino)-1-oxopropan-2-yl)glutamine, respectively. N-pyruvoylanthranilamide is further converted via two further branches in the pathway, yielding chrysogine and additional chrysogine-related coumpounds. Chrysogine is likely formed by a spontaneous ring closure from N-pyruvoylanthranilamide. This chain is Glutamine amidotransferase-like protein chyE, found in Penicillium rubens (strain ATCC 28089 / DSM 1075 / NRRL 1951 / Wisconsin 54-1255) (Penicillium chrysogenum).